The chain runs to 219 residues: MSGWSGPLARRGPGPLALLFLFLLGPSSVLAISFHLPVNSRKCLREEIHKDLLVTGAYEITDQSGGAGGLRTHLKITDSAGHILYSKEDASKGKFAFTTEDYDMFEVCFESKGTGRIPDQLVILDMKHGVEAKNYEEIAKVEKLKPLEVELRRLEDLSESIVNDFAYMKKREEEMRDTNESTNTRVLYFSIFSMFCLIGLATWQVFYLRRFFKAKKLIE.

Positions 1-31 (MSGWSGPLARRGPGPLALLFLFLLGPSSVLA) are cleaved as a signal peptide. The tract at residues 1-142 (MSGWSGPLAR…KNYEEIAKVE (142 aa)) is required for interaction with STX17. Topologically, residues 32 to 185 (ISFHLPVNSR…RDTNESTNTR (154 aa)) are lumenal. In terms of domain architecture, GOLD spans 41-193 (RKCLREEIHK…TRVLYFSIFS (153 aa)). The segment at 147 to 178 (LEVELRRLEDLSESIVNDFAYMKKREEEMRDT) is required for TMED10 and TMED2 cis-Golgi network localization. Dimethylated arginine is present on residues Arg171 and Arg176. A glycan (N-linked (GlcNAc...) asparagine) is linked at Asn179. A helical transmembrane segment spans residues 186–206 (VLYFSIFSMFCLIGLATWQVF). Residues 204 to 219 (QVFYLRRFFKAKKLIE) are interaction with COPG1. Residues 207-219 (YLRRFFKAKKLIE) are Cytoplasmic-facing. Residues 207–219 (YLRRFFKAKKLIE) are interaction with ARF1 and IL1B. The short motif at 211-212 (FF) is the COPII vesicle coat-binding element. The COPI vesicle coat-binding motif lies at 211–219 (FFKAKKLIE).

It belongs to the EMP24/GP25L family. Predominantly dimeric and to a lesser extent monomeric in the ER. Monomer and dimer in ERGIC and cis-Golgi network. Forms homooligomer (via GOLD domain); the assembly is promoted by direct binding with leaderless cargos and may form a protein channel that facilitates cargo entry into the ERGIC. Forms heterooligomeric complexes with other members of the p24 family such as TMED2, TMED7 and TMED9. Interacts (via GOLD domain) with TMED2 (via GOLD domain); the complex is required for export of TMED10 from the ER to the cis-Golgi network; the complex is proposed to be involved in cis-Golgi network dynamics and / or biogenesis. Associates with the COPI vesicle coat subunits (coatomer). Tetramerization of the cytoplasmic domain at the Golgi membrane in vitro; the complex is proposed to interact with COPI coatomer and induce budding of the vesicles. Interacts with COPG1; the interaction involves TMED10 homodimer. Interacts with ARF1 (GDP-bound); the interaction probably involves a TMED10 oligomer. Interacts with SEC23A, SEC24B, SEC24C and SEC24D components of the coat protein complex II/COPII, indicative of an association of TMED10 with the COPII vesicle coat. Interacts with CD59. Interacts with MPPE1/PGAP5; the complex might recruit and sort GPI-anchored proteins to the ER-exit site, or the interaction might lead to recycling of PGAP5 between the ER and the Golgi. Interacts with F2LR1/PAR2. Interacts with KDELR2/ERD2; the interaction is disrupted by KDELR2 ligand. Found in a complex composed at least of SURF4, TMED2 and TMED10. Associates with the presenilin-dependent gamma-secretase complex. Interacts with STX17; the interaction is direct. Interacts with IL-1; the interaction is direct. Interacts with RAB21 (active GTP-bound form); the interaction is indirect and regulates TMED10 abundance and localization at the Golgi.

The protein resides in the endoplasmic reticulum membrane. It localises to the endoplasmic reticulum-Golgi intermediate compartment membrane. It is found in the golgi apparatus membrane. The protein localises to the golgi apparatus. Its subcellular location is the cis-Golgi network membrane. The protein resides in the trans-Golgi network membrane. It localises to the cytoplasmic vesicle. It is found in the secretory vesicle membrane. The protein localises to the cell membrane. Its subcellular location is the melanosome. Functionally, cargo receptor involved in protein vesicular trafficking and quality control in the endoplasmic reticulum (ER) and Golgi. The p24 protein family is a group of transmembrane proteins that bind coat protein complex I/COPI and coat protein complex II/COPII involved in vesicular trafficking between the membranes. Acts at the lumenal side for incorporation of secretory cargo molecules into transport vesicles and involved in vesicle coat formation at the cytoplasmic side. Mainly functions in the early secretory pathway and cycles between the ER, ER-Golgi intermediate compartment (ERGIC) and Golgi, mediating cargo transport through COPI and COPII-coated vesicles. In COPII vesicle-mediated anterograde transport, involved in the transport of GPI-anchored proteins by acting together with TMED2 as their cargo receptor; the function specifically implies SEC24C and SEC24D of the COPII vesicle coat and lipid raft-like microdomains of the ER. Recognizes GPI anchors structural remodeled in the ER by the GPI inositol-deacylase/PGAP1 and the metallophosphoesterase MPPE1/PGAP5. In COPI vesicle-mediated retrograde transport, involved in the biogenesis of COPI vesicles and vesicle coat recruitment. Involved in trafficking of amyloid beta A4 protein and soluble APP-beta release (independent from the modulation of gamma-secretase activity). Involved in the KDELR2-mediated retrograde transport of the toxin A subunit (CTX-A-K63)together with COPI and the COOH terminus of KDELR2. On Golgi membranes, acts as a primary receptor for ARF1-GDP, a GTP-binding protein involved in COPI-vesicle formation. Increases coatomer-dependent GTPase-activating activity of ARFGAP2 which mediates the hydrolysis of ARF1-bound GTP and therefore modulates protein trafficking from the Golgi apparatus. Involved in the exocytic trafficking of G protein-coupled receptors F2LR1/PAR2 (trypsin and tryspin-like enzyme receptor), OPRM1 (opioid receptor) and P2RY4 (UTD and UDP receptor) from the Golgi to the plasma membrane, thus contributing to receptor resensitization. In addition to its cargo receptor activity, may also act as a protein channel after oligomerization, facilitating the post-translational entry of leaderless cytoplasmic cargo into the ERGIC. Involved in the translocation into ERGIC, the vesicle entry and the secretion of leaderless cargos (lacking the secretion signal sequence), including the mature form of interleukin 1/IL-1 family members, the alpha-crystallin B chain HSPB5, the carbohydrate-binding proteins galectin-1/LGALS1 and galectin-3/LGALS3, the microtubule-associated protein Tau/MAPT, and the annexin A1/ANXA1; the translocation process is dependent on cargo protein unfolding and enhanced by chaperones HSP90AB1 and HSP90B1/GRP9. Could also associates with the presenilin-dependent gamma-secretase complex in order to regulate gamma-cleavages of the amyloid beta A4 protein to yield amyloid-beta 40/Abeta40. The protein is Transmembrane emp24 domain-containing protein 10 (TMED10) of Oryctolagus cuniculus (Rabbit).